The sequence spans 301 residues: GTPase Era (301 aa).

Residues 6–173 (KSGFVAIVGR…LEQTNANLEI (168 aa)) form the Era-type G domain. The segment at 14-21 (GRPNVGKS) is G1. 14–21 (GRPNVGKS) provides a ligand contact to GTP. A G2 region spans residues 40–44 (QTTRN). The interval 61-64 (DTPG) is G3. GTP is bound by residues 61-65 (DTPGI) and 123-126 (NKID). A G4 region spans residues 123–126 (NKID). The interval 152–154 (ISA) is G5. One can recognise a KH type-2 domain in the interval 204 to 282 (TREEVPHSVA…FLEIWVKVQK (79 aa)).

Belongs to the TRAFAC class TrmE-Era-EngA-EngB-Septin-like GTPase superfamily. Era GTPase family. As to quaternary structure, monomer.

It is found in the cytoplasm. The protein localises to the cell membrane. Functionally, an essential GTPase that binds both GDP and GTP, with rapid nucleotide exchange. Plays a role in 16S rRNA processing and 30S ribosomal subunit biogenesis and possibly also in cell cycle regulation and energy metabolism. This Listeria welshimeri serovar 6b (strain ATCC 35897 / DSM 20650 / CCUG 15529 / CIP 8149 / NCTC 11857 / SLCC 5334 / V8) protein is GTPase Era.